A 134-amino-acid polypeptide reads, in one-letter code: uncharacterized protein (134 aa).

Residues 110–130 (SLGVLTDILFLVLYSLLIHLS) form a helical membrane-spanning segment.

The protein localises to the membrane. This is an uncharacterized protein from Saccharomyces cerevisiae (strain ATCC 204508 / S288c) (Baker's yeast).